The chain runs to 509 residues: NADH-quinone oxidoreductase subunit M (509 aa).

The helical transmembrane segment at 1–21 (MLLPWLILIPFIGGFLCWQTE) threads the bilayer. Residues 22–29 (RFGVKVPR) are Cytoplasmic-facing. The chain crosses the membrane as a helical span at residues 30 to 50 (WIALITMGLTLALSLQLWLQG). Residues 51–82 (GYSLTQSAGIPQWQSEFDMPWIPRFGISIHLA) lie on the Periplasmic side of the membrane. Residues 83 to 103 (IDGLSLLMVVLTGLLGVLAVL) form a helical membrane-spanning segment. Over 104-121 (CSWKEIEKYQGFFHLNLM) the chain is Cytoplasmic. The chain crosses the membrane as a helical span at residues 122 to 142 (WILGGVIGVFLAIDMFLFFFF). The Periplasmic portion of the chain corresponds to 143-173 (WEMMLVPMYFLIALWGHKASDGKTRITAATK). The chain crosses the membrane as a helical span at residues 174-194 (FFIYTQASGLVMLIAILALVF). The Cytoplasmic portion of the chain corresponds to 195-221 (VHYNATGVWTFNYEELLNTPMSSGVEY). Residues 222 to 242 (LLMLGFFIAFAVKMPVVPLHG) form a helical membrane-spanning segment. The Periplasmic portion of the chain corresponds to 243–258 (WLPDAHSQAPTAGSVD). A helical membrane pass occupies residues 259–279 (LAGILLKTAAYGLLRFSLPLF). The Cytoplasmic segment spans residues 280 to 285 (PNASAE). The helical transmembrane segment at 286-306 (FAPIAMWLGVIGIFYGAWMAF) threads the bilayer. Topologically, residues 307-313 (AQTDIKR) are periplasmic. The helical transmembrane segment at 314–334 (LIAYTSVSHMGFVLIAIYTGS) threads the bilayer. At 335–339 (QLAYQ) the chain is on the cytoplasmic side. Residues 340 to 360 (GAVIQMIAHGLSAAGLFILCG) traverse the membrane as a helical segment. Topologically, residues 361 to 382 (QLYERIHTRDMRMMGGLWSKMK) are periplasmic. 2 helical membrane-spanning segments follow: residues 383–403 (WLPA…GTGN) and 404–424 (FVGE…ITVI). Ser425 is a topological domain (periplasmic). Residues 426–446 (TFGLVFASVYSLAMLHRAYFG) form a helical membrane-spanning segment. Residues 447–464 (KAKSQIASQELPGMSLRE) lie on the Cytoplasmic side of the membrane. Residues 465–485 (LFMILLLVVLLVLLGFYPQPI) traverse the membrane as a helical segment. Over 486–509 (LDTSHSAIGNIQQWFVNSVTTTRP) the chain is Periplasmic.

This sequence belongs to the complex I subunit 4 family. In terms of assembly, composed of 13 different subunits. Subunits NuoA, H, J, K, L, M, N constitute the membrane sector of the complex.

It localises to the cell inner membrane. It carries out the reaction a quinone + NADH + 5 H(+)(in) = a quinol + NAD(+) + 4 H(+)(out). NDH-1 shuttles electrons from NADH, via FMN and iron-sulfur (Fe-S) centers, to quinones in the respiratory chain. The immediate electron acceptor for the enzyme in this species is believed to be ubiquinone. Couples the redox reaction to proton translocation (for every two electrons transferred, four hydrogen ions are translocated across the cytoplasmic membrane), and thus conserves the redox energy in a proton gradient. The sequence is that of NADH-quinone oxidoreductase subunit M (nuoM) from Escherichia coli O157:H7.